Consider the following 422-residue polypeptide: 3-isopropylmalate dehydratase large subunit (422 aa).

[4Fe-4S] cluster contacts are provided by C294, C354, and C357.

It belongs to the aconitase/IPM isomerase family. LeuC type 2 subfamily. In terms of assembly, heterodimer of LeuC and LeuD. [4Fe-4S] cluster is required as a cofactor.

The catalysed reaction is (2R,3S)-3-isopropylmalate = (2S)-2-isopropylmalate. Its pathway is amino-acid biosynthesis; L-leucine biosynthesis; L-leucine from 3-methyl-2-oxobutanoate: step 2/4. In terms of biological role, catalyzes the isomerization between 2-isopropylmalate and 3-isopropylmalate, via the formation of 2-isopropylmaleate. The polypeptide is 3-isopropylmalate dehydratase large subunit (Mycolicibacterium smegmatis (strain ATCC 700084 / mc(2)155) (Mycobacterium smegmatis)).